The chain runs to 254 residues: Undecaprenyl-diphosphatase 3 (254 aa).

The next 8 helical transmembrane spans lie at 8–28 (TEFLPVSSTGHMILTGHLIGF), 33–53 (AKVFEVVIQLGSILAVVVIFW), 74–94 (LHIIIGMIPAGVLGVLFHSAI), 97–117 (VLFGPGPVVISLVAGGILMIV), 133–153 (ITYKQAFTIGMFQCLALWPGF), 174–194 (AEYTFILAVPMMVAASGLDLI), 207–227 (LFATGFITAFVVAMLAIVSFL), and 233–253 (VKLTPFAYYRFILAAVFYFFI).

The protein belongs to the UppP family.

It localises to the cell membrane. The catalysed reaction is di-trans,octa-cis-undecaprenyl diphosphate + H2O = di-trans,octa-cis-undecaprenyl phosphate + phosphate + H(+). Catalyzes the dephosphorylation of undecaprenyl diphosphate (UPP). Confers resistance to bacitracin. This chain is Undecaprenyl-diphosphatase 3, found in Bacillus thuringiensis (strain Al Hakam).